A 337-amino-acid chain; its full sequence is MSISELSQDLLEEILCRVPAISLKKLRSTCKLWNSLFIDKRVRNELRRVTVSQVFHCDGLLLYINGVDTIMVVWNPFMGQTRWVQPIARDQTHKYVLGSYQDIKSRITSYKILRYRYTLCGSKLAFEICELYSSSWRVLDITMDFDLYHNSCVSLKGKTYWLTFDKKDRELDMFSFDYATESFGNRMPLPYQFPRCSYETVALSVVREEKLSVLLQLRGTSRKEIWVTNKINETTQVLSWSKVLTLDNSDFGYCPGLSFFVDEEKKQVLCFEKCRVFHIHTNDEVFENKVYTVGEDNKVTQLRFEQSFCPKMDPYVFGYVPSLVQIEQPRRKRKRGD.

Positions 1 to 46 (MSISELSQDLLEEILCRVPAISLKKLRSTCKLWNSLFIDKRVRNEL) constitute an F-box domain.

This is Putative F-box protein At4g09870 from Arabidopsis thaliana (Mouse-ear cress).